Here is a 62-residue protein sequence, read N- to C-terminus: Photosystem II reaction center protein Z (62 aa).

The next 2 helical transmembrane spans lie at 8–28 (ALAA…FAYA) and 41–61 (WVGS…NFFV).

Belongs to the PsbZ family. In terms of assembly, PSII is composed of 1 copy each of membrane proteins PsbA, PsbB, PsbC, PsbD, PsbE, PsbF, PsbH, PsbI, PsbJ, PsbK, PsbL, PsbM, PsbT, PsbX, PsbY, PsbZ, Psb30/Ycf12, peripheral proteins PsbO, CyanoQ (PsbQ), PsbU, PsbV and a large number of cofactors. It forms dimeric complexes.

Its subcellular location is the cellular thylakoid membrane. In terms of biological role, may control the interaction of photosystem II (PSII) cores with the light-harvesting antenna, regulates electron flow through the 2 photosystem reaction centers. PSII is a light-driven water plastoquinone oxidoreductase, using light energy to abstract electrons from H(2)O, generating a proton gradient subsequently used for ATP formation. The polypeptide is Photosystem II reaction center protein Z (Gloeothece citriformis (strain PCC 7424) (Cyanothece sp. (strain PCC 7424))).